A 517-amino-acid chain; its full sequence is Heat shock 70-related protein 5 (517 aa).

This sequence belongs to the heat shock protein 70 family.

May function in protein folding and assembly, and disassembly of protein complexes. The sequence is that of Heat shock 70-related protein 5 from Dictyostelium discoideum (Social amoeba).